A 407-amino-acid polypeptide reads, in one-letter code: Putative glycosyltransferase YtcC (407 aa).

The protein belongs to the glycosyltransferase group 1 family. Glycosyltransferase 4 subfamily.

The polypeptide is Putative glycosyltransferase YtcC (ytcC) (Bacillus subtilis (strain 168)).